Here is a 466-residue protein sequence, read N- to C-terminus: Transcription factor SOX-10 (466 aa).

Disordered stretches follow at residues 1–67 (MAEE…DDDK), 160–198 (LRMQ…TDQG), 213–275 (DHRH…DFGN), 355–375 (QVKT…QPST), and 433–466 (RPLY…LSRP). Residues 23-32 (LSPSSAPSLG) are compositionally biased toward low complexity. Position 24 is a phosphoserine (S24). The dimerization (DIM) stretch occupies residues 62 to 102 (EADDDKFPVCIREAVSQVLSGYDWTLVPMPVRVNGASKSKP). The segment at residues 104 to 172 (VKRPMNAFMV…QHKKDHPDYK (69 aa)) is a DNA-binding region (HMG box). Basic and acidic residues-rich tracts occupy residues 160 to 173 (LRMQ…DYKY) and 254 to 271 (ADPK…KPHI). The segment at 228-310 (PEHPSGQSHG…LPPNGHPGHV (83 aa)) is transactivation domain (TAM). Positions 353–466 (KAQVKTETTG…QPVYTTLSRP (114 aa)) are transactivation domain (TAC). Residues 440-466 (SDPSPSGPQSHSPTHWEQPVYTTLSRP) show a composition bias toward polar residues.

In terms of assembly, monomer. Interacts with Armcx3 at the mitochondrial outer membrane surface. Interacts with PAX3. As to expression, predominant expression in glial cells of the nervous system.

Its subcellular location is the cytoplasm. The protein resides in the nucleus. It localises to the mitochondrion outer membrane. Functionally, transcription factor that plays a central role in developing and mature glia. Specifically activates expression of myelin genes, during oligodendrocyte (OL) maturation, such as DUSP15 and MYRF, thereby playing a central role in oligodendrocyte maturation and CNS myelination. Once induced, MYRF cooperates with SOX10 to implement the myelination program. Transcriptional activator of MITF, acting synergistically with PAX3. Transcriptional activator of MBP, via binding to the gene promoter. The protein is Transcription factor SOX-10 (Sox10) of Rattus norvegicus (Rat).